Reading from the N-terminus, the 120-residue chain is uncharacterized protein (120 aa).

The protein belongs to the asp23 family.

This is an uncharacterized protein from Bacillus subtilis (strain 168).